The sequence spans 858 residues: Volume-regulated anion channel subunit LRRC8D (858 aa).

Over 1–22 (MFTLAEVASLNDIQPTYRILKP) the chain is Cytoplasmic. The helical transmembrane segment at 23-48 (WWDVFMDYLAVVMLMVAIFAGTMQLT) threads the bilayer. Over 49-163 (KDQVVCLPVL…YHLALPWYSK (115 aa)) the chain is Extracellular. Cys54 and Cys354 are disulfide-bonded. Residues 164–182 (YFPYLALIHTIILMVSSNF) form a helical membrane-spanning segment. Topologically, residues 183–308 (WFKYPKTCSK…EDSDLIYKLY (126 aa)) are cytoplasmic. The tract at residues 221–251 (SEENKQRITGAQTLPKHVSTSSDEGSPSAST) is disordered. Residues 227 to 251 (RITGAQTLPKHVSTSSDEGSPSAST) show a composition bias toward polar residues. Residues Ser241, Ser242, and Ser246 each carry the phosphoserine modification. A helical transmembrane segment spans residues 309-328 (VVQTVIKTAKFIFILCYTAN). Topologically, residues 329-360 (FVNAISFEHVCKPKVEHLIGYEVFECTHNMAY) are extracellular. The helical transmembrane segment at 361-386 (MLKKLLISYISIICVYGFICLYTLFW) threads the bilayer. Residues 387–858 (LFRIPLKEYS…DINIPFANGI (472 aa)) are Cytoplasmic-facing. LRR repeat units lie at residues 514–534 (NLQE…AFSF), 538–559 (HLRC…VYLL), 561–582 (NLRE…IGLE), 589–609 (HLKI…ITDV), 612–632 (HLTK…NSLK), 636–657 (NVAE…IFSL), 659–680 (NLQE…ISFQ), 684–705 (RLTC…ITHV), 707–728 (NLES…VFSL), 730–751 (KLRC…IGLL), 753–774 (NLQH…LFKC), 776–797 (KLRT…VGQL), and 799–820 (QLTQ…LGQC).

This sequence belongs to the LRRC8 family. In terms of assembly, heterohexamer; oligomerizes with other LRRC8 proteins (LRRC8A, LRRC8B, LRRC8C and/or LRRC8E) to form a heterohexamer. In vivo, the subunit composition may depend primarily on expression levels, and heterooligomeric channels containing various proportions of the different LRRC8 proteins may coexist.

The protein localises to the cell membrane. The protein resides in the endoplasmic reticulum membrane. The enzyme catalyses chloride(in) = chloride(out). It catalyses the reaction iodide(out) = iodide(in). The catalysed reaction is taurine(out) = taurine(in). Functionally, non-essential component of the volume-regulated anion channel (VRAC, also named VSOAC channel), an anion channel required to maintain a constant cell volume in response to extracellular or intracellular osmotic changes. The VRAC channel conducts iodide better than chloride and can also conduct organic osmolytes like taurine. Plays a redundant role in the efflux of amino acids, such as aspartate, in response to osmotic stress. LRRC8A and LRRC8D are required for the uptake of the drug cisplatin. Channel activity requires LRRC8A plus at least one other family member (LRRC8B, LRRC8C, LRRC8D or LRRC8E); channel characteristics depend on the precise subunit composition. Also acts as a regulator of glucose-sensing in pancreatic beta cells: VRAC currents, generated in response to hypotonicity- or glucose-induced beta cell swelling, depolarize cells, thereby causing electrical excitation, leading to increase glucose sensitivity and insulin secretion. VRAC channels containing LRRC8D inhibit transport of immunoreactive cyclic dinucleotide GMP-AMP (2'-3'-cGAMP), an immune messenger produced in response to DNA virus in the cytosol. Mediates the import of the antibiotic blasticidin-S into the cell. The chain is Volume-regulated anion channel subunit LRRC8D from Homo sapiens (Human).